Here is a 91-residue protein sequence, read N- to C-terminus: Conotoxin VnMKLT1-021 (91 aa).

The N-terminal stretch at 1 to 22 (MKLTCVMIVAVLFLTAWTFVTA) is a signal peptide. Positions 23–57 (DDPRDGPDTAVGWRKLFSEARDEMKNREASKLNER) are excised as a propeptide. 3 disulfide bridges follow: C59–C78, C66–C82, and C77–C86.

Belongs to the conotoxin O1 superfamily. As to expression, expressed by the venom duct.

It is found in the secreted. This chain is Conotoxin VnMKLT1-021, found in Conus ventricosus (Mediterranean cone).